A 574-amino-acid chain; its full sequence is MKRSLQALYCQLLSFLLTLALTKALVLAVHEPSPRESLQTLPSGSPPGTMVTAPHSPTRLSSVLTLNPTPDGPSSQAAATLETTVSHPEGHPPTDTTSTVMGTAAVPHPESPLPTGSPPAAMTTTPSHSESLPPGDATPTTTLPTKPAGTTSRPTVAPRATTRRPPRPPGSSRKGAGGSTRTLTPVPGGHLARKESQRGRNQSSAHLGPKRPLGKIFQIYKGNFTGSAEPDPSALTPRTPLGGYFSSTQPQTVSPATAPRSTSRVPPTTSLVPVKDKPGFIRSNQGSGPILTSPGGEPAATAATGAPASTQPAPVPSQSPHGDVQDSASHSDSWLAVTPDTDRPTSASSGVFTAATGPTQAAFDATVSAPSPGIPQGPSATPQAPTRPSGVSESTVSPAEEEAEASPTTTDRGPRPLSTVLSTATGNFLNRLVPAGTWKPGTVANISHVAEGDKPQHRATICLSKMDIAWVIVAISVPISSCSVLLTVCCMRRKKKTANPENNLSYWNNAITMDYFNRHAVELPREIQSLETSEDQLSEPRSPANGDYRDTGMVLVNPFCQETLFVGNDQVSEI.

A helical membrane pass occupies residues Tyr9–Val29. Positions Glu31–Pro169 are interaction with SH3GL2. Disordered regions lie at residues Pro32–Phe352 and Asp364–Leu417. Positions Thr58–Ser86 are enriched in polar residues. Positions Leu132–Ala160 are enriched in low complexity. Residues Arg173–Ser406 form an interaction with DST (isoform 1) region. Residues Phe245–Leu271 show a composition bias toward polar residues. The segment covering Thr292–Pro312 has biased composition (low complexity). Positions Pro316–Asp332 are enriched in polar residues. A helical transmembrane segment spans residues Ile468–Val488. Residues Cys489 to Ile574 are interaction with CYFIP2.

As to quaternary structure, interacts with DST (isoform 1). Interacts with SH3GL2. Interacts (via N-terminus) with CYFIP1 and CYFIP2; the interactions associate TMEM108 with the WAVE1 complex. Glycosylated. Expressed in the nervous system tissues, such as hippocampus and spinal cord, is barely detectable in peripheral tissues such as heart, lung, liver, kidney and muscle. In brain, highly expressed in dentate gyrus neurons and expressed in cortex, olfactory bulb, ammon's horn, cerebellum, hypothalamus and striatum.

The protein localises to the membrane. It localises to the postsynaptic density. The protein resides in the endosome membrane. It is found in the cell projection. Its subcellular location is the axon. The protein localises to the dendrite. It localises to the early endosome. In terms of biological role, transmembrane protein required for proper cognitive functions. Involved in the development of dentate gyrus (DG) neuron circuitry, is necessary for AMPA receptors surface expression and proper excitatory postsynaptic currents of DG granule neurons. Regulates the organization and stability of the microtubule network of sensory neurons to allow axonal transport. Through the interaction with DST, mediates the docking of the dynein/dynactin motor complex to vesicle cargos for retrograde axonal transport. In hippocampal neurons, required for BDNF-dependent dendrite outgrowth. Cooperates with SH3GL2 and recruits the WAVE1 complex to facilitate actin-dependent BDNF:NTRK2 early endocytic trafficking and mediate signaling from early endosomes. This is Transmembrane protein 108 from Mus musculus (Mouse).